The chain runs to 117 residues: Large ribosomal subunit protein bL20c (117 aa).

It belongs to the bacterial ribosomal protein bL20 family.

Its subcellular location is the plastid. The protein resides in the chloroplast. Its function is as follows. Binds directly to 23S ribosomal RNA and is necessary for the in vitro assembly process of the 50S ribosomal subunit. It is not involved in the protein synthesizing functions of that subunit. The protein is Large ribosomal subunit protein bL20c of Aethionema grandiflorum (Persian stone-cress).